We begin with the raw amino-acid sequence, 92 residues long: PqqA binding protein (92 aa).

This sequence belongs to the PqqD family. As to quaternary structure, monomer. Interacts with PqqE.

The protein operates within cofactor biosynthesis; pyrroloquinoline quinone biosynthesis. Functions as a PqqA binding protein and presents PqqA to PqqE, in the pyrroloquinoline quinone (PQQ) biosynthetic pathway. The sequence is that of PqqA binding protein from Pseudomonas paraeruginosa (strain DSM 24068 / PA7) (Pseudomonas aeruginosa (strain PA7)).